A 154-amino-acid polypeptide reads, in one-letter code: Hemiasterlin resistant protein 1 (154 aa).

Disordered regions lie at residues 1-64 and 86-109; these read MVRR…PGLM and GMFT…PAGA. Low complexity-rich tracts occupy residues 7-28, 48-57, and 96-109; these read ASPS…SSFA, TPMGAPMGAP, and AEQA…PAGA. Residues 116 to 154 enclose the CHCH domain; that stretch reads SQPCEFEWRQFVDCAQNQSDVSLCNGFNDIFKQCKARYA. 2 short sequence motifs (cx9C motif) span residues 119 to 129 and 139 to 149; these read CEFEWRQFVDC and CNGFNDIFKQC. Cystine bridges form between cysteine 119–cysteine 149 and cysteine 129–cysteine 139.

This is Hemiasterlin resistant protein 1 (har-1) from Caenorhabditis elegans.